Consider the following 256-residue polypeptide: Reaction center protein M chain (256 aa).

The next 3 membrane-spanning stretches (helical) occupy residues 52-78, 110-139, and 142-167; these read PGVAGTVSAVLFAFAFLIIGANFLASV, EGGWWQITGFFLTMSLLVWWWHVYNRARAL, and GTHMAWAFASALFLYLTLGFIRPLLL. (7R,8Z)-bacteriochlorophyll b is bound by residues His181 and His201. Residues 197-225 form a helical membrane-spanning segment; the sequence is YNPFHMLSIAFLYGSAVLFAMHGATILAV. Fe cation-binding residues include His218 and Glu233. An a ubiquinone-binding site is contributed by Trp251.

The protein belongs to the reaction center PufL/M/PsbA/D family. Reaction center is composed of four bacteriochlorophylls, two bacteriopheophytins, two ubiquinones, one iron, and two highly hydrophobic polypeptide chains (designated L and M).

The protein localises to the cellular chromatophore membrane. The reaction center is a membrane-bound complex that mediates the initial photochemical event in the electron transfer process of photosynthesis. The protein is Reaction center protein M chain (pufM) of Pararhodospirillum photometricum (Rhodospirillum photometricum).